The chain runs to 479 residues: Ribosomal protein uS12 methylthiotransferase RimO (479 aa).

Residues 1–34 (MTVNTFDPSKASPVTHASDSASKTPEPNAVAAPS) form a disordered region. The segment covering 15 to 25 (THASDSASKTP) has biased composition (polar residues). In terms of domain architecture, MTTase N-terminal spans 39-151 (NRVGFVSLGC…VMGAVHGYIP (113 aa)). [4Fe-4S] cluster is bound by residues Cys48, Cys84, Cys113, Cys184, Cys188, and Cys191. Residues 170–407 (LTPRHYAYLK…METQQAISAA (238 aa)) form the Radical SAM core domain. One can recognise a TRAM domain in the interval 410 to 476 (KQKVGYEMDV…DYDLTGIAVE (67 aa)).

This sequence belongs to the methylthiotransferase family. RimO subfamily. [4Fe-4S] cluster is required as a cofactor.

It is found in the cytoplasm. The enzyme catalyses L-aspartate(89)-[ribosomal protein uS12]-hydrogen + (sulfur carrier)-SH + AH2 + 2 S-adenosyl-L-methionine = 3-methylsulfanyl-L-aspartate(89)-[ribosomal protein uS12]-hydrogen + (sulfur carrier)-H + 5'-deoxyadenosine + L-methionine + A + S-adenosyl-L-homocysteine + 2 H(+). Functionally, catalyzes the methylthiolation of an aspartic acid residue of ribosomal protein uS12. The protein is Ribosomal protein uS12 methylthiotransferase RimO of Saccharophagus degradans (strain 2-40 / ATCC 43961 / DSM 17024).